A 260-amino-acid chain; its full sequence is MSHGWGYADHNGPQKWCENFPIANGPRQSPIDIQTKGASYDDTLKPLKLKYDPTTSLDILNNGHSFQVTFADDNDSSMLTEGPISGKYRLKQFHFHWGASDGKGSEHTVDGKCYPAELHLVHWNTKYASFGEAANKPDGLAVVGVFLQIGEDNPKLQKILDAMDAIKSKGKQTSFTNFDPTCLLPKSLEYWTYPGSLTTPPLYESVTWIVCKQPISVSSEQMKKFRSLLFTAEEEKACCMVNNYRPPQPLKDRKVCASFK.

Residues 3 to 259 (HGWGYADHNG…LKDRKVCASF (257 aa)) enclose the Alpha-carbonic anhydrase domain. The active-site Proton donor/acceptor is the H64. Residues H94, H96, and H119 each contribute to the Zn(2+) site. 198 to 199 (TT) contacts substrate.

This sequence belongs to the alpha-carbonic anhydrase family. Requires Zn(2+) as cofactor.

It is found in the cytoplasm. The catalysed reaction is hydrogencarbonate + H(+) = CO2 + H2O. Catalyzes the reversible hydration of carbon dioxide. This chain is Carbonic anhydrase 2 (ca2), found in Pseudaspius hakonensis (Big-scaled redfin).